Reading from the N-terminus, the 501-residue chain is MTLASPRVSNSKTTVLLFPRKVSSIAFAIGGLTSFVIFASLLLFTYPIGSSVTDYFYRTETTQNVQFHHSIHDPDRNPSPVSSSESPPVLTQDSDDKVLPKGSHDSNDVRLGEETNSGKSSNVSIDEEATQDHVETECDLYHGNWFYDPMGPLYTNNSCPLLTQMQNCQGNGRPDKGYENWRWKPSQCDLPRFDAKKFLELMRGKTLAFIGDSVARNQMESMMCLLWQVETPVNRGNRKMQRWYFRSSSVMIARMWSSWLVHQFNEPFGFATDGVTKLKLDQPDERIIEALPNFDVVVLSSGHWFAKQSVYILNDQIVGGQLWWPDKSKPEKINNVEAFGISVETIIKAMAKHPNYTGLTILRTWSPDHYEGGAWNTGGSCTGKVEPLPPGNLVTNGFTEIMHEKQATGFHRAVADDKLGNRSKKLKLMDITEAFGYRHDGHPGPYRSPDPKKITKRGPDGQPPPQDCLHWCMPGPVDTWNEMVLEIIRRDFEGRQSSPSS.

Residues 25–45 traverse the membrane as a helical; Signal-anchor for type II membrane protein segment; the sequence is IAFAIGGLTSFVIFASLLLFT. Positions 69-131 are disordered; it reads HSIHDPDRNP…NVSIDEEATQ (63 aa). Residues 78–89 show a composition bias toward low complexity; it reads PSPVSSSESPPV. The span at 94–113 shows a compositional bias: basic and acidic residues; it reads SDDKVLPKGSHDSNDVRLGE. Residues 114–124 show a composition bias toward polar residues; sequence ETNSGKSSNVS. Positions 211-213 match the GDS motif motif; the sequence is GDS. The segment at 438–467 is disordered; that stretch reads RHDGHPGPYRSPDPKKITKRGPDGQPPPQD. The segment covering 449–459 has biased composition (basic and acidic residues); sequence PDPKKITKRGP. A DCXHWCLPGXXDXWN motif motif is present at residues 467–481; that stretch reads DCLHWCMPGPVDTWN.

The protein belongs to the PC-esterase family. TBL subfamily. In terms of tissue distribution, expressed in roots, cauline leaves and flowers.

The protein localises to the membrane. Functionally, may act as a bridging protein that binds pectin and other cell wall polysaccharides. Probably involved in maintaining esterification of pectins. May be involved in the specific O-acetylation of cell wall polymers. This Arabidopsis thaliana (Mouse-ear cress) protein is Protein YLS7 (YLS7).